A 181-amino-acid polypeptide reads, in one-letter code: Transcriptional repressor NrdR (181 aa).

Residues 3 to 34 fold into a zinc finger; sequence CPFCRHPDSRVVDSREAEEGSAIRRRRSCLSC. Residues 46–136 form the ATP-cone domain; that stretch reads LQVRKRSGAA…VYLAFESLTD (91 aa). The disordered stretch occupies residues 148-181; it reads AAGPPTTRDGPARPVPRGAVDVSPVIGTQQVHSR.

It belongs to the NrdR family. Zn(2+) is required as a cofactor.

Negatively regulates transcription of bacterial ribonucleotide reductase nrd genes and operons by binding to NrdR-boxes. The polypeptide is Transcriptional repressor NrdR (Frankia casuarinae (strain DSM 45818 / CECT 9043 / HFP020203 / CcI3)).